The sequence spans 20 residues: Trypsin inhibitor (20 aa).

The tract at residues 1-20 is disordered; sequence APSDTTIAETLTITEEFFPD.

Hemolymph.

It is found in the secreted. The protein localises to the extracellular space. Functionally, inhibits trypsin stoichiometrically. Also inhibits chymotrypsin very weakly. The chain is Trypsin inhibitor from Mythimna unipuncta (Armyworm moth).